A 481-amino-acid chain; its full sequence is Delta 4,5-hexuronate-2-O-sulfatase (481 aa).

Position 64 is a 3-oxoalanine (Ser) (Ser64). Zn(2+) is bound by residues Cys225, Cys226, His462, and His469. A disordered region spans residues 453–481; sequence VDADPRCRNHTPGYPSHEGPGAREILKRK. The span at 472–481 shows a compositional bias: basic and acidic residues; it reads PGAREILKRK.

The protein belongs to the sulfatase family. Requires Zn(2+) as cofactor. Post-translationally, the conversion to 3-oxoalanine (also known as C-formylglycine, FGly), of a serine or cysteine residue in prokaryotes and of a cysteine residue in eukaryotes, is critical for catalytic activity.

Exosulfatase involved in the degradation of the glycosaminoglycans (GAGs) chondroitin sulfate (CS), dermatan sulfate (DS) and heparan sulfate (HS). 2-O-sulfatase active on unsaturated non-reducing end hexuronate units. Has a slight preference for HS-derived structures. GAG-specific sulfatases play a key role in the persistence of the major human gut symbiont B.thetaiotaomicron in the host gastrointestinal tract. The chain is Delta 4,5-hexuronate-2-O-sulfatase from Bacteroides thetaiotaomicron (strain ATCC 29148 / DSM 2079 / JCM 5827 / CCUG 10774 / NCTC 10582 / VPI-5482 / E50).